The following is a 426-amino-acid chain: MARGAHQAPGGFWTVAAAPTRCSLPHSLPIPLHAAAAAAAWMAGVSAASAAGKIGSFLSKRPYAPPSWASHLSPAPSQTFSLGHFPTPIHKWNLPNLPNGTEVWIKRDDISGMQLSGNKVRKLEFLMADAVAQGADCVITVGGIQSNHCRATAVAAKYINLDCYLILRTSKLLVDKDPGLVGNLLVERLVGAHIDLVSKEEYGKIGSVALADLLKKKLLEEGRKPYVIPVGGSNSLGTWGYIEAIREIEHQIQISGDVQFDDIVVACGSGGTIAGLALGSKLSSLKAKVHAFSVCDDPGYFHSYVQDLIDGLHSDLRSHDLVNIENAKGLGYAMNTAEELKFVKDIATATGIVLDPVYSGKAAYGMLKDMGANPAKWEGRKILFVHTGGLLGLYDKVDELSSLSGSWRRMDLEESVPRKDGTGKMF.

A mitochondrion-targeting transit peptide spans 1–63 (MARGAHQAPG…IGSFLSKRPY (63 aa)). Position 119 is an N6-(pyridoxal phosphate)lysine (lysine 119). The active-site Nucleophile is the serine 146.

It belongs to the ACC deaminase/D-cysteine desulfhydrase family. In terms of assembly, homodimer. Requires pyridoxal 5'-phosphate as cofactor. In terms of tissue distribution, present in seeds (at protein level).

It is found in the mitochondrion. It carries out the reaction D-cysteine + H2O = hydrogen sulfide + pyruvate + NH4(+) + H(+). Its activity is regulated as follows. Inhibited by L-cysteine (L-cys). Its function is as follows. Catalyzes the production of hydrogen sulfide (H2S) from D-cysteine (D-cys). The sequence is that of D-cysteine desulfhydrase 1, mitochondrial from Oryza sativa subsp. japonica (Rice).